The primary structure comprises 90 residues: U7-theraphotoxin-Hhn1k (90 aa).

The first 19 residues, 1–19, serve as a signal peptide directing secretion; it reads MKTAIFTVVLALAVFAVLS. The propeptide occupies 20 to 50; the sequence is FGWEANEKALSEEFTELIHEKEAASETEARE. 2 disulfide bridges follow: Cys-51-Cys-65 and Cys-58-Cys-70.

Belongs to the neurotoxin 10 (Hwtx-1) family. 13 (Hntx-13) subfamily. In terms of tissue distribution, expressed by the venom gland.

Its subcellular location is the secreted. Functionally, ion channel inhibitor. This Cyriopagopus hainanus (Chinese bird spider) protein is U7-theraphotoxin-Hhn1k.